The primary structure comprises 446 residues: Chromosomal replication initiator protein DnaA (446 aa).

The interval 1 to 81 is domain I, interacts with DnaA modulators; the sequence is MENIADLWNS…AKLNIRFIIP (81 aa). The domain II stretch occupies residues 81–109; it reads PQSQTEEEVDYPPAKAKKMNDESNHLPQS. The segment at 110–326 is domain III, AAA+ region; it reads MLNPKYTFDT…GALIRVVAYS (217 aa). The ATP site is built by G154, G156, K157, and T158. The segment at 327–446 is domain IV, binds dsDNA; it reads SLINKDINAD…QIEEINDILK (120 aa).

Belongs to the DnaA family. Oligomerizes as a right-handed, spiral filament on DNA at oriC.

It is found in the cytoplasm. Plays an essential role in the initiation and regulation of chromosomal replication. ATP-DnaA binds to the origin of replication (oriC) to initiate formation of the DNA replication initiation complex once per cell cycle. Binds the DnaA box (a 9 base pair repeat at the origin) and separates the double-stranded (ds)DNA. Forms a right-handed helical filament on oriC DNA; dsDNA binds to the exterior of the filament while single-stranded (ss)DNA is stabiized in the filament's interior. The ATP-DnaA-oriC complex binds and stabilizes one strand of the AT-rich DNA unwinding element (DUE), permitting loading of DNA polymerase. After initiation quickly degrades to an ADP-DnaA complex that is not apt for DNA replication. Binds acidic phospholipids. In Bacillus cytotoxicus (strain DSM 22905 / CIP 110041 / 391-98 / NVH 391-98), this protein is Chromosomal replication initiator protein DnaA.